The primary structure comprises 327 residues: Malate dehydrogenase (327 aa).

Glycine 12 to alanine 18 provides a ligand contact to NAD(+). Substrate contacts are provided by arginine 93 and arginine 99. Residues asparagine 106, glutamine 113, and valine 130–asparagine 132 contribute to the NAD(+) site. Asparagine 132 and arginine 163 together coordinate substrate. Histidine 188 (proton acceptor) is an active-site residue.

It belongs to the LDH/MDH superfamily. MDH type 2 family.

The enzyme catalyses (S)-malate + NAD(+) = oxaloacetate + NADH + H(+). Its function is as follows. Catalyzes the reversible oxidation of malate to oxaloacetate. The protein is Malate dehydrogenase of Acidiphilium cryptum (strain JF-5).